The sequence spans 293 residues: ATP phosphoribosyltransferase (293 aa).

It belongs to the ATP phosphoribosyltransferase family. Long subfamily. Requires Mg(2+) as cofactor.

It is found in the cytoplasm. The enzyme catalyses 1-(5-phospho-beta-D-ribosyl)-ATP + diphosphate = 5-phospho-alpha-D-ribose 1-diphosphate + ATP. It functions in the pathway amino-acid biosynthesis; L-histidine biosynthesis; L-histidine from 5-phospho-alpha-D-ribose 1-diphosphate: step 1/9. Its activity is regulated as follows. Feedback inhibited by histidine. Catalyzes the condensation of ATP and 5-phosphoribose 1-diphosphate to form N'-(5'-phosphoribosyl)-ATP (PR-ATP). Has a crucial role in the pathway because the rate of histidine biosynthesis seems to be controlled primarily by regulation of HisG enzymatic activity. This chain is ATP phosphoribosyltransferase, found in Nitratidesulfovibrio vulgaris (strain DSM 19637 / Miyazaki F) (Desulfovibrio vulgaris).